A 499-amino-acid polypeptide reads, in one-letter code: MADNLLSEQLLQRLQDGDNKGVDTLELAAVLSVDHQQVVGAVKSLQCLGEIIEAEQRSSKKWELSSEGEEIAQVGSHEARVFQSLPKEGLLQAELMKLPFAKVGFSKAMSNKWIRLDKAAAGGPCVYRVVETIEDTVKEKLQLILKGRADDVNEKDKNELKKRKLVNEVTVKSYWVTKGSGFSTSITKQETDLTPEMIASGSWREKQFKGYNFNALGVMPECGHLHPLLKVRTQFRQIFLEMGFTEMPTNNFIESSFWNFDALFQPQQHPARDQHDTFFLQDPALATEFPMEYLERVKKVHSEGGYGSQGYKYDWSIHEAQKNILRTHTTAVSARMLYKLAHQKEFTPVKYFSIDRVFRNETLDATHLAEFHQIEGVVADRGLTLGNLMGVLKEFFHKLGITKLRFKPAYNPYTEPSMEVFSYHEGLKKWVEVGNSGLFRPELLLPMGLPGDVNVLGWGLSLERPTMIRYGIKNIRELVGHKVNLQMVYDSPICRLDAC.

Residues threonine 330, 373-375, and tyrosine 413 each bind L-phenylalanine; that span reads QIE. Glutamate 415 serves as a coordination point for Mg(2+). Residue phenylalanine 439 coordinates L-phenylalanine.

This sequence belongs to the class-II aminoacyl-tRNA synthetase family. Phe-tRNA synthetase alpha subunit type 2 subfamily. As to quaternary structure, heterotetramer; dimer of two heterodimers formed by alpha and beta subunits. Requires Mg(2+) as cofactor.

The protein resides in the cytoplasm. The enzyme catalyses tRNA(Phe) + L-phenylalanine + ATP = L-phenylalanyl-tRNA(Phe) + AMP + diphosphate + H(+). This Xenopus laevis (African clawed frog) protein is Phenylalanine--tRNA ligase alpha subunit B (farsa-b).